The primary structure comprises 331 residues: Pantothenate kinase (331 aa).

ATP is bound at residue 109–116 (GSVAVGKS).

Belongs to the prokaryotic pantothenate kinase family.

It localises to the cytoplasm. It catalyses the reaction (R)-pantothenate + ATP = (R)-4'-phosphopantothenate + ADP + H(+). The protein operates within cofactor biosynthesis; coenzyme A biosynthesis; CoA from (R)-pantothenate: step 1/5. The protein is Pantothenate kinase of Sinorhizobium medicae (strain WSM419) (Ensifer medicae).